The primary structure comprises 37 residues: Rugosin-C (37 aa).

A disulfide bridge connects residues cysteine 31 and cysteine 37.

This sequence belongs to the frog skin active peptide (FSAP) family. Brevinin subfamily. As to expression, expressed by the skin glands.

The protein localises to the secreted. Has antibacterial activity against Gram-positive bacteria. This chain is Rugosin-C, found in Glandirana rugosa (Japanese wrinkled frog).